Here is an 88-residue protein sequence, read N- to C-terminus: Cytochrome c oxidase subunit 6B2 (88 aa).

The segment at 1–22 (MLDVEAQEPPKGKWSTPPFDPR) is disordered. The CHCH domain maps to 29-75 (IRNCYQNFLDYHRCLKTRTRRGKSTQPCEYYFRVYHSLCPISWVESW). The Cx9C motif signature appears at 32–42 (CYQNFLDYHRC). Cystine bridges form between Cys-32–Cys-67 and Cys-42–Cys-56. Residues 56–67 (CEYYFRVYHSLC) carry the Cx10C motif motif.

This sequence belongs to the cytochrome c oxidase subunit 6B family. As to quaternary structure, component of the cytochrome c oxidase (complex IV, CIV), a multisubunit enzyme composed of 14 subunits. The complex is composed of a catalytic core of 3 subunits MT-CO1, MT-CO2 and MT-CO3, encoded in the mitochondrial DNA, and 11 supernumerary subunits COX4I1 (or COX4I2), COX5A, COX5B, COX6A1 (or COX6A2), COX6B1 (or COX6B2), COX6C, COX7A2 (or COX7A1), COX7B, COX7C, COX8A and NDUFA4, which are encoded in the nuclear genome. The complex exists as a monomer or a dimer and forms supercomplexes (SCs) in the inner mitochondrial membrane with NADH-ubiquinone oxidoreductase (complex I, CI) and ubiquinol-cytochrome c oxidoreductase (cytochrome b-c1 complex, complex III, CIII), resulting in different assemblies (supercomplex SCI(1)III(2)IV(1) and megacomplex MCI(2)III(2)IV(2)). In terms of tissue distribution, testis specific. Weak expression in thymus and heart. Expressed in cancer cell lines.

It localises to the mitochondrion inner membrane. The protein operates within energy metabolism; oxidative phosphorylation. Functionally, component of the cytochrome c oxidase, the last enzyme in the mitochondrial electron transport chain which drives oxidative phosphorylation. The respiratory chain contains 3 multisubunit complexes succinate dehydrogenase (complex II, CII), ubiquinol-cytochrome c oxidoreductase (cytochrome b-c1 complex, complex III, CIII) and cytochrome c oxidase (complex IV, CIV), that cooperate to transfer electrons derived from NADH and succinate to molecular oxygen, creating an electrochemical gradient over the inner membrane that drives transmembrane transport and the ATP synthase. Cytochrome c oxidase is the component of the respiratory chain that catalyzes the reduction of oxygen to water. Electrons originating from reduced cytochrome c in the intermembrane space (IMS) are transferred via the dinuclear copper A center (CU(A)) of subunit 2 and heme A of subunit 1 to the active site in subunit 1, a binuclear center (BNC) formed by heme A3 and copper B (CU(B)). The BNC reduces molecular oxygen to 2 water molecules using 4 electrons from cytochrome c in the IMS and 4 protons from the mitochondrial matrix. This chain is Cytochrome c oxidase subunit 6B2 (COX6B2), found in Homo sapiens (Human).